The primary structure comprises 160 residues: Regulatory protein RecX (160 aa).

Belongs to the RecX family.

It is found in the cytoplasm. Modulates RecA activity. The chain is Regulatory protein RecX from Xanthomonas oryzae pv. oryzae (strain MAFF 311018).